A 300-amino-acid polypeptide reads, in one-letter code: Integrin-binding sialoprotein (300 aa).

Residues 41–258 (RFPVQSSSDS…YEQTGAHEYD (218 aa)) form a disordered region. Phosphoserine occurs at positions 46, 51, 59, 60, 82, and 90. Residues 46-58 (SSSDSSEENGNGD) show a composition bias toward low complexity. The span at 59–92 (SSEEEEEEEENSNEEENNEENEDSDGNEDEDSEA) shows a compositional bias: acidic residues. Positions 93 to 102 (ENITLSTTTL) are enriched in polar residues. A glycan (N-linked (GlcNAc...) asparagine) is linked at Asn-94. Residues 125–136 (KAGDIGKKSAKE) show a composition bias toward basic and acidic residues. Over residues 137-160 (EESDEDEEEEEENEENEAEVDDNE) the composition is skewed to acidic residues. Ser-139 is modified (phosphoserine). 3 stretches are compositionally biased toward polar residues: residues 161 to 173 (QGTN…STEV), 193 to 202 (VTEAQGTTVA), and 229 to 243 (ISGT…TTTP). Residues Asn-164 and Asn-169 are each glycosylated (N-linked (GlcNAc...) asparagine). The residue at position 266 (Ser-266) is a Phosphoserine. The Integrin-binding motif motif lies at 272–274 (RGD). A Phosphoserine modification is found at Ser-293. Residues Tyr-299 and Tyr-300 each carry the sulfotyrosine modification.

As to quaternary structure, monomer. Interacts with integrins; the interaction promotes cell adhesion.

The protein resides in the secreted. Its function is as follows. Binds tightly to hydroxyapatite. Appears to form an integral part of the mineralized matrix. Probably important to cell-matrix interaction. Promotes adhesion and migration of various cells via the alpha-V/beta-3 integrin receptor (ITGAV:ITGB3). This is Integrin-binding sialoprotein (IBSP) from Sus scrofa (Pig).